Here is a 329-residue protein sequence, read N- to C-terminus: Ribosomal RNA small subunit methyltransferase H (329 aa).

S-adenosyl-L-methionine-binding positions include Gly39–Tyr41, Asp56, Phe85, Asp106, and Gln113. The tract at residues Ser289 to Ala308 is disordered.

The protein belongs to the methyltransferase superfamily. RsmH family.

It is found in the cytoplasm. It carries out the reaction cytidine(1402) in 16S rRNA + S-adenosyl-L-methionine = N(4)-methylcytidine(1402) in 16S rRNA + S-adenosyl-L-homocysteine + H(+). Its function is as follows. Specifically methylates the N4 position of cytidine in position 1402 (C1402) of 16S rRNA. The chain is Ribosomal RNA small subunit methyltransferase H from Novosphingobium aromaticivorans (strain ATCC 700278 / DSM 12444 / CCUG 56034 / CIP 105152 / NBRC 16084 / F199).